A 204-amino-acid polypeptide reads, in one-letter code: Tetraspanin-13 (204 aa).

Residues 1–19 (MVCGGFSCSKNCLCALNLL) lie on the Cytoplasmic side of the membrane. The chain crosses the membrane as a helical span at residues 20–40 (YTLVSLLLIGIAAWGIGFGLI). The Extracellular segment spans residues 41–44 (SSLR). A helical transmembrane segment spans residues 45–65 (VVGVVIAVGIFLFLIALVGLI). Over 66 to 72 (GAVKHHQ) the chain is Cytoplasmic. A helical transmembrane segment spans residues 73 to 93 (VLLFFYMIILLLVFIVQFSVS). The Extracellular segment spans residues 94 to 167 (CACLALNREQ…IGEYAGEVLR (74 aa)). Residues Asn113 and Asn137 are each glycosylated (N-linked (GlcNAc...) asparagine). Residue Ser143 is modified to Phosphoserine. The helical transmembrane segment at 168-188 (FVGGIGLFFSFTEILGVWLTY) threads the bilayer. Residues 189–204 (RYRNQKDPRANPSAFL) are Cytoplasmic-facing.

This sequence belongs to the tetraspanin (TM4SF) family.

It is found in the membrane. This chain is Tetraspanin-13 (Tspan13), found in Rattus norvegicus (Rat).